The following is a 63-amino-acid chain: Metallothionein-2 (63 aa).

Positions 1-30 (MDPQDCTCAAGDSCSCAGSCKCKNCRCQSC) are beta. Residues Cys-6, Cys-8, Cys-14, Cys-16, Cys-20, Cys-22, Cys-25, Cys-27, Cys-30, Cys-34, Cys-35, Cys-37, Cys-38, Cys-42, Cys-45, Cys-49, Cys-51, Cys-59, Cys-61, and Cys-62 each contribute to the a divalent metal cation site. The tract at residues 31–63 (RKSCCSCCPASCSNCAKGCVCKEPSSSKCSCCH) is alpha.

It belongs to the metallothionein superfamily. Type 1 family.

Functionally, metallothioneins have a high content of cysteine residues that bind various heavy metals. In Columba livia (Rock dove), this protein is Metallothionein-2.